Here is a 215-residue protein sequence, read N- to C-terminus: Penicillin-binding protein activator LpoB (215 aa).

The signal sequence occupies residues 1–19 (MMKMCRYALITALAIFLAG). C20 is lipidated: N-palmitoyl cysteine. C20 carries the S-diacylglycerol cysteine lipid modification. The interval 28–78 (APVEEAKPQPQQPAQPQPTVPTVPAVPSVPAQPGPIEHQDQQSGQPAPRVR) is disordered. Residues 37 to 48 (PQQPAQPQPTVP) are compositionally biased toward pro residues. Low complexity predominate over residues 49 to 58 (TVPAVPSVPA).

It belongs to the LpoB family. Interacts with PBP1b.

It is found in the cell outer membrane. In terms of biological role, regulator of peptidoglycan synthesis that is essential for the function of penicillin-binding protein 1B (PBP1b). This Klebsiella pneumoniae subsp. pneumoniae (strain ATCC 700721 / MGH 78578) protein is Penicillin-binding protein activator LpoB.